We begin with the raw amino-acid sequence, 432 residues long: Anaerobic glycerol-3-phosphate dehydrogenase subunit B (432 aa).

The protein belongs to the anaerobic G-3-P dehydrogenase subunit B family. Composed of a catalytic GlpA/B dimer and of membrane bound GlpC. FMN serves as cofactor.

The enzyme catalyses a quinone + sn-glycerol 3-phosphate = dihydroxyacetone phosphate + a quinol. Its pathway is polyol metabolism; glycerol degradation via glycerol kinase pathway; glycerone phosphate from sn-glycerol 3-phosphate (anaerobic route): step 1/1. Functionally, conversion of glycerol 3-phosphate to dihydroxyacetone. Uses fumarate or nitrate as electron acceptor. The protein is Anaerobic glycerol-3-phosphate dehydrogenase subunit B of Haemophilus influenzae (strain PittGG).